The chain runs to 577 residues: MNIQALLSEKVSQAMIAAGAPADCEPQVRQSAKVQFGDYQANGMMAVAKKLGMAPRQLAEQVLTHLDLSGIASKVEIAGPGFINIFLEPAFLAEQVQQALASERLGVSQPTRQTIVVDYSAPNVAKEMHVGHLRSTIIGDAAVRTLEFLGHHVIRANHVGDWGTQFGMLIAWLEKQQQENAGDMALADLEGFYRDAKKHYDEDEAFAERARNYVVKLQSGDTYFREMWRKLVDITMTQNQITYDRLNVTLTRDDVMGESLYNPMLPGIVADLKAKGLAVESEGATVVFLDEFKNKEGDPMGVIIQKKDGGYLYTTTDIACAKYRYETLHADRVLYYIDSRQHQHLMQAWTIVRKAGYVPDSVPLEHHMFGMMLGKDGKPFKTRAGGTVKLADLLDEALERARRLVAEKNPDMSADELEKLANAVGIGAVKYADLSKNRTTDYIFDWDNMLAFEGNTAPYMQYAYTRVLSVFRKADIDEQALASAPVIISEDREAQLAARLLQFEETLTVVAREGTPHVMCAYLYDVAGLFSGFYEHCPILSAENDAVRNSRLKLAQLTAKTLKLGLDTLGIETVERM.

A 'HIGH' region motif is present at residues 122 to 132; sequence PNVAKEMHVGH.

The protein belongs to the class-I aminoacyl-tRNA synthetase family. Monomer.

It localises to the cytoplasm. The catalysed reaction is tRNA(Arg) + L-arginine + ATP = L-arginyl-tRNA(Arg) + AMP + diphosphate. In Salmonella dublin (strain CT_02021853), this protein is Arginine--tRNA ligase.